A 290-amino-acid polypeptide reads, in one-letter code: 4-diphosphocytidyl-2-C-methyl-D-erythritol kinase (290 aa).

Residue K20 is part of the active site. 104–114 contributes to the ATP binding site; it reads PMGGGLGGGSS. D146 is an active-site residue.

The protein belongs to the GHMP kinase family. IspE subfamily.

It catalyses the reaction 4-CDP-2-C-methyl-D-erythritol + ATP = 4-CDP-2-C-methyl-D-erythritol 2-phosphate + ADP + H(+). The protein operates within isoprenoid biosynthesis; isopentenyl diphosphate biosynthesis via DXP pathway; isopentenyl diphosphate from 1-deoxy-D-xylulose 5-phosphate: step 3/6. Catalyzes the phosphorylation of the position 2 hydroxy group of 4-diphosphocytidyl-2C-methyl-D-erythritol. The protein is 4-diphosphocytidyl-2-C-methyl-D-erythritol kinase of Shewanella frigidimarina (strain NCIMB 400).